We begin with the raw amino-acid sequence, 501 residues long: Glycerol kinase (501 aa).

Position 16 (Thr16) interacts with ADP. Residues Thr16, Thr17, and Ser18 each coordinate ATP. Thr16 lines the sn-glycerol 3-phosphate pocket. Arg20 contacts ADP. Arg84, Glu85, Tyr135, and Asp242 together coordinate sn-glycerol 3-phosphate. Arg84, Glu85, Tyr135, Asp242, and Gln243 together coordinate glycerol. 2 residues coordinate ADP: Thr264 and Gly307. Thr264, Gly307, Gln311, and Gly408 together coordinate ATP. Gly408 contacts ADP.

This sequence belongs to the FGGY kinase family.

It carries out the reaction glycerol + ATP = sn-glycerol 3-phosphate + ADP + H(+). Its pathway is polyol metabolism; glycerol degradation via glycerol kinase pathway; sn-glycerol 3-phosphate from glycerol: step 1/1. Its function is as follows. Key enzyme in the regulation of glycerol uptake and metabolism. Catalyzes the phosphorylation of glycerol to yield sn-glycerol 3-phosphate. The protein is Glycerol kinase of Saccharolobus islandicus (strain M.14.25 / Kamchatka #1) (Sulfolobus islandicus).